We begin with the raw amino-acid sequence, 175 residues long: Large ribosomal subunit protein uL10 (175 aa).

It belongs to the universal ribosomal protein uL10 family. In terms of assembly, part of the ribosomal stalk of the 50S ribosomal subunit. The N-terminus interacts with L11 and the large rRNA to form the base of the stalk. The C-terminus forms an elongated spine to which L12 dimers bind in a sequential fashion forming a multimeric L10(L12)X complex.

Its function is as follows. Forms part of the ribosomal stalk, playing a central role in the interaction of the ribosome with GTP-bound translation factors. The protein is Large ribosomal subunit protein uL10 of Xylella fastidiosa (strain M12).